The chain runs to 182 residues: uncharacterized protein (182 aa).

The next 2 helical transmembrane spans lie at 29-49 and 63-83; these read IISG…AGLP and FYFP…MLTL.

The protein resides in the cell membrane. This is an uncharacterized protein from Ureaplasma parvum serovar 3 (strain ATCC 700970).